We begin with the raw amino-acid sequence, 1593 residues long: THO complex subunit 2 (1593 aa).

Positions 1–163 (MAAAAVVVPA…KLFYKQQKFN (163 aa)) are anchor domain; interaction with THOC5 and THOC7. The segment at 164 to 534 (LLREENEGYA…GQWKNETYNS (371 aa)) is bow domain; interaction with THOC1 dock domain and THOC3. The segment at 322-341 (KMDEREKEKEKEEEKVEKPP) is disordered. Residues 535–686 (HPLLVKVKAQ…LILKEVVQKM (152 aa)) form an MIF4G domain; interaction with THOC3 and DDX39B region. The stern domain stretch occupies residues 687–1174 (AGIEITEEMT…LAMGYSGQLK (488 aa)). Positions 896–965 (HTSYEREVNK…LKLEKDNWLL (70 aa)) form a coiled coil. The Nuclear localization signal motif lies at 923 to 928 (KKKKEK). The tract at residues 1175–1593 (SRKSYMIPEN…KHHKSSDKHR (419 aa)) is charged domain. The interval 1184-1593 (NEFHHKDPPP…KHHKSSDKHR (410 aa)) is disordered. Positions 1218–1234 (KSDESSTEETDKSRERS) are enriched in basic and acidic residues. Ser-1222 is subject to Phosphoserine. The segment covering 1251-1263 (GNSSNGNSGSNSN) has biased composition (low complexity). 3 stretches are compositionally biased toward basic and acidic residues: residues 1265–1285 (AVKE…KEKT), 1294–1343 (VLGK…EKFK), and 1353–1383 (STQE…KGGE). Thr-1385 carries the post-translational modification Phosphothreonine. Ser-1390, Ser-1393, and Ser-1417 each carry phosphoserine. The segment covering 1416-1425 (PSPSHSSTVK) has biased composition (polar residues). Thr-1443 carries the phosphothreonine modification. Residues 1449-1504 (KSKEREMDKKDLDKSRERSREREKKDEKDRKERKRDHSNNDREVPPDLTKRRKEEN) are compositionally biased toward basic and acidic residues. A phosphoserine mark is found at Ser-1450, Ser-1486, and Ser-1516. The span at 1524-1582 (NEKDKEKNKSKSSGKEKGSDSFKSEKMDKISSGGKKESRHDKEKIEKKEKRDSSGGKEE) shows a compositional bias: basic and acidic residues. A compositionally biased stretch (basic residues) spans 1583-1593 (KKHHKSSDKHR).

Belongs to the THOC2 family. Component of the THO subcomplex, which is composed of THOC1, THOC2, THOC3, THOC5, THOC6 and THOC7. The THO subcomplex interacts with DDX39B to form the THO-DDX39B complex which multimerizes into a 28-subunit tetrameric assembly. Component of the transcription/export (TREX) complex at least composed of ALYREF/THOC4, DDX39B, SARNP/CIP29, CHTOP and the THO subcomplex; in the complex interacts with THOC1, THOC3, THOC5, THOC7 and DDX39B. TREX seems to have a dynamic structure involving ATP-dependent remodeling. Interacts with POLDIP3 and ZC3H11A. Expressed in the hippocampus and the cerebral cortex.

It is found in the nucleus. Its subcellular location is the nucleus speckle. The protein localises to the cytoplasm. Its function is as follows. Component of the THO subcomplex of the TREX complex which is thought to couple mRNA transcription, processing and nuclear export, and which specifically associates with spliced mRNA and not with unspliced pre-mRNA. Required for efficient export of polyadenylated RNA and spliced mRNA. The THOC1-THOC2-THOC3 core complex alone is sufficient to bind export factor NXF1-NXT1 and promote ATPase activity of DDX39B; in the complex THOC2 is the only component that directly interacts with DDX39B. TREX is recruited to spliced mRNAs by a transcription-independent mechanism, binds to mRNA upstream of the exon-junction complex (EJC) and is recruited in a splicing- and cap-dependent manner to a region near the 5' end of the mRNA where it functions in mRNA export to the cytoplasm via the TAP/NXF1 pathway. Required for NXF1 localization to the nuclear rim. THOC2 (and probably the THO complex) is involved in releasing mRNA from nuclear speckle domains. (Microbial infection) The TREX complex is essential for the export of Kaposi's sarcoma-associated herpesvirus (KSHV) intronless mRNAs and infectious virus production. The protein is THO complex subunit 2 (THOC2) of Homo sapiens (Human).